Here is a 1931-residue protein sequence, read N- to C-terminus: Cytadherence high molecular weight protein 2 (1931 aa).

3 coiled-coil regions span residues 1626–1659 (KEHQ…LTES), 1768–1846 (FNTQ…IKTN), and 1903–1930 (HAKK…KQTS).

Functionally, component of the cytoskeleton-like structure which stabilizes the shape of the wall-less Mycoplasma. This cytoskeleton-like network of accessory proteins containing HMW proteins 1 to 5 allows the proper anchoring of cytadhesin proteins in the mycoplasmal membrane at the attachment organelle. The chain is Cytadherence high molecular weight protein 2 (hlp2) from Mycoplasmoides gallisepticum (strain R(low / passage 15 / clone 2)) (Mycoplasma gallisepticum).